The sequence spans 264 residues: Indole-3-glycerol phosphate synthase (264 aa).

The protein belongs to the TrpC family.

It catalyses the reaction 1-(2-carboxyphenylamino)-1-deoxy-D-ribulose 5-phosphate + H(+) = (1S,2R)-1-C-(indol-3-yl)glycerol 3-phosphate + CO2 + H2O. It participates in amino-acid biosynthesis; L-tryptophan biosynthesis; L-tryptophan from chorismate: step 4/5. This is Indole-3-glycerol phosphate synthase from Azoarcus sp. (strain BH72).